The primary structure comprises 220 residues: Deoxyribose-phosphate aldolase (220 aa).

The active-site Proton donor/acceptor is the aspartate 89. The Schiff-base intermediate with acetaldehyde role is filled by lysine 151. Lysine 180 functions as the Proton donor/acceptor in the catalytic mechanism.

This sequence belongs to the DeoC/FbaB aldolase family. DeoC type 1 subfamily.

It is found in the cytoplasm. It carries out the reaction 2-deoxy-D-ribose 5-phosphate = D-glyceraldehyde 3-phosphate + acetaldehyde. It participates in carbohydrate degradation; 2-deoxy-D-ribose 1-phosphate degradation; D-glyceraldehyde 3-phosphate and acetaldehyde from 2-deoxy-alpha-D-ribose 1-phosphate: step 2/2. Functionally, catalyzes a reversible aldol reaction between acetaldehyde and D-glyceraldehyde 3-phosphate to generate 2-deoxy-D-ribose 5-phosphate. This chain is Deoxyribose-phosphate aldolase, found in Macrococcus caseolyticus (strain JCSC5402) (Macrococcoides caseolyticum).